The chain runs to 156 residues: Cellulose synthase operon protein D (156 aa).

It functions in the pathway glycan metabolism; bacterial cellulose biosynthesis. May have a major role in the perfection of crystallization, involved either in the pore structure itself or in the organization of the pores within the linear array of terminal synthesizing complexes (TCs). The protein is Cellulose synthase operon protein D of Komagataeibacter sucrofermentans (strain ATCC 700178 / DSM 15973 / CECT 7291 / JCM 9730 / LMG 18788 / BPR 2001) (Acetobacter xylinus subsp. sucrofermentans).